A 115-amino-acid chain; its full sequence is MPYFTIDTNIPQNSISSAFLKKASNVVAKALGKPESYVSIHVNGGQAMVFGGSEDPCAVCVLKSIGCVGPKVNNSHAEKLYKLLADELKIPKNRCYIEFVDIEASSMAFNGSTFG.

Proline 2 (proton acceptor; via imino nitrogen) is an active-site residue. The substrate site is built by lysine 33 and isoleucine 65.

This sequence belongs to the MIF family.

It localises to the secreted. The catalysed reaction is L-dopachrome = 5,6-dihydroxyindole-2-carboxylate. The enzyme catalyses 3-phenylpyruvate = enol-phenylpyruvate. In terms of biological role, tautomerization of the methyl ester of L-dopachrome. Inhibits migration of human peripheral blood mononuclear cells. In Brugia malayi (Filarial nematode worm), this protein is Macrophage migration inhibitory factor homolog.